The primary structure comprises 373 residues: Alpha-N-acetylgalactosaminide alpha-2,6-sialyltransferase 2 (373 aa).

The Cytoplasmic portion of the chain corresponds to 1 to 6 (MDLPRR). The chain crosses the membrane as a helical; Signal-anchor for type II membrane protein span at residues 7 to 27 (WLFRMLLLVATSSGILLMLYS). The Lumenal portion of the chain corresponds to 28–373 (SAGQQSPETQ…NAGILWLYQR (346 aa)). 2 disulfides stabilise this stretch: Cys65/Cys147 and Cys150/Cys316. Residue Asn103 is glycosylated (N-linked (GlcNAc...) asparagine). A CMP-N-acetyl-beta-neuraminate-binding site is contributed by Asn155. Asn160 carries an N-linked (GlcNAc...) asparagine glycan. CMP-N-acetyl-beta-neuraminate is bound by residues Asn178, Ser303, and His335.

Belongs to the glycosyltransferase 29 family. In terms of tissue distribution, highly expressed in lactating mammary gland and adult testis. Lower levels in kidney.

It localises to the golgi apparatus membrane. The enzyme catalyses a beta-D-galactosyl-(1-&gt;3)-N-acetyl-alpha-D-galactosaminyl derivative + CMP-N-acetyl-beta-neuraminate = a beta-D-galactosyl-(1-&gt;3)-[N-acetyl-alpha-neuraminyl-(2-&gt;6)]-N-acetyl-alpha-D-galactosaminyl derivative + CMP + H(+). It catalyses the reaction a 3-O-[N-acetyl-alpha-D-galactosaminyl]-L-threonyl-[protein] + CMP-N-acetyl-beta-neuraminate = a 3-O-[N-acetyl-alpha-neuraminosyl-(2-&gt;6)-N-acetyl-alpha-D-galactosaminyl]-L-threonyl-[protein] + CMP + H(+). It carries out the reaction a 3-O-[N-acetyl-alpha-neuraminyl-(2-&gt;3)-beta-D-galactosyl-(1-&gt;3)-N-acetyl-alpha-D-galactosaminyl]-L-threonyl-[protein] + CMP-N-acetyl-beta-neuraminate = a 3-O-{alpha-Neu5Ac-(2-&gt;3)-beta-D-Gal-(1-&gt;3)-[alpha-Neu5Ac-(2-&gt;6)]-alpha-D-GalNAc}-L-threonyl-[protein] + CMP + H(+). It functions in the pathway protein modification; protein glycosylation. In terms of biological role, catalyzes the transfer of N-acetylneuraminyl groups onto glycan chains in glycoproteins. Conjugates sialic acid with an alpha-2-6 linkage to N-acetylgalactosamine (GalNAc) glycan chains linked to serine or threonine in glycoproteins. Sialylates alphaGalNAc- and Galbeta1-&gt;3GalNAc-O-Ser/Thr epitopes also known as Tn and T antigens. This Mus musculus (Mouse) protein is Alpha-N-acetylgalactosaminide alpha-2,6-sialyltransferase 2 (St6galnac2).